We begin with the raw amino-acid sequence, 593 residues long: Metal-response element-binding transcription factor 2 (593 aa).

Residues 1–24 (MRDSTGAGNSLVHKRSPLRRNQKT) are disordered. Positions 12–22 (VHKRSPLRRNQ) are enriched in basic residues. Thr-24 is subject to Phosphothreonine. Positions 44–101 (CKFEEGQDVLARWSDGLFYLGTIKKINILKQSCFIIFEDSSKSWVLWKDIQTGATGSG) constitute a Tudor domain. PHD-type zinc fingers lie at residues 102 to 157 (EMVC…CVFA) and 201 to 255 (QCYC…CSSG). Disordered stretches follow at residues 357–410 (VAFK…GPYT) and 444–486 (GIAH…TRTG). Residue Lys-360 forms a Glycyl lysine isopeptide (Lys-Gly) (interchain with G-Cter in SUMO2) linkage. A compositionally biased stretch (basic and acidic residues) spans 360 to 374 (KAEKEPEGTSHEFKI). Positions 447 to 470 (HSSNTSDVDLTGASSANETTSASI) are enriched in polar residues. Phosphoserine is present on Ser-452. Lys-522 is covalently cross-linked (Glycyl lysine isopeptide (Lys-Gly) (interchain with G-Cter in SUMO2)).

This sequence belongs to the Polycomblike family. In terms of assembly, associates with the PRC2 complex, which consists of the core components EED, EZH1 or EZH2, SUZ12, and RBBP4, and various combinations of accessory subunits including AEBP2, JARID2, PHF19, MTF2 and EPOP. Forms a dimeric PRC2.1 (class 1, PRC-PCL) complex consisting of at least SUZ12, RBBP4, and PHF19 or MTF2; PHF19 and MTF2 stabilize the dimeric structure which enhances PRC2 interaction with chromatin.

It localises to the nucleus. Its function is as follows. Polycomb group (PcG) protein that specifically binds histone H3 trimethylated at 'Lys-36' (H3K36me3) and recruits the PRC2 complex, thus enhancing PRC2 H3K27me3 methylation activity. Regulates the transcriptional networks during embryonic stem cell self-renewal and differentiation. Promotes recruitment of the PRC2 complex to the inactive X chromosome in differentiating XX ES cells and PRC2 recruitment to target genes in undifferentiated ES cells. Required to repress Hox genes by enhancing H3K27me3 methylation of the PRC2 complex. In some conditions may act as an inhibitor of PRC2 activity: able to activate the CDKN2A gene and promote cellular senescence by suppressing the catalytic activity of the PRC2 complex locally. Binds to the metal-regulating-element (MRE) of MT1A gene promoter. The polypeptide is Metal-response element-binding transcription factor 2 (Mtf2) (Mus musculus (Mouse)).